The chain runs to 1177 residues: uncharacterized protein (1177 aa).

An N-terminal signal peptide occupies residues 1–26; sequence MKKLLKKSKFWWFLLCGLSVSTILVA. Cysteine 27 carries N-palmitoyl cysteine lipidation. A lipid anchor (S-diacylglycerol cysteine) is attached at cysteine 27.

The protein belongs to the MG307/MG309/MG338 family.

Its subcellular location is the cell membrane. This is an uncharacterized protein from Mycoplasma genitalium (strain ATCC 33530 / DSM 19775 / NCTC 10195 / G37) (Mycoplasmoides genitalium).